The sequence spans 188 residues: Pyridoxal 5'-phosphate synthase subunit PdxT (188 aa).

46–48 contacts L-glutamine; sequence GES. Catalysis depends on cysteine 78, which acts as the Nucleophile. L-glutamine contacts are provided by residues arginine 105 and 134–135; that span reads IR. Residues histidine 170 and glutamate 172 each act as charge relay system in the active site.

It belongs to the glutaminase PdxT/SNO family. As to quaternary structure, in the presence of PdxS, forms a dodecamer of heterodimers. Only shows activity in the heterodimer.

The enzyme catalyses aldehydo-D-ribose 5-phosphate + D-glyceraldehyde 3-phosphate + L-glutamine = pyridoxal 5'-phosphate + L-glutamate + phosphate + 3 H2O + H(+). It carries out the reaction L-glutamine + H2O = L-glutamate + NH4(+). Its pathway is cofactor biosynthesis; pyridoxal 5'-phosphate biosynthesis. Its function is as follows. Catalyzes the hydrolysis of glutamine to glutamate and ammonia as part of the biosynthesis of pyridoxal 5'-phosphate. The resulting ammonia molecule is channeled to the active site of PdxS. This is Pyridoxal 5'-phosphate synthase subunit PdxT from Moorella thermoacetica (strain ATCC 39073 / JCM 9320).